A 331-amino-acid chain; its full sequence is UBX domain-containing protein 2B (331 aa).

Disordered stretches follow at residues 1-26 (MAEG…SARD) and 40-65 (KCKS…QRFY). Residue Ala-2 is modified to N-acetylalanine. Ser-56 is modified (phosphoserine). Phosphothreonine is present on Thr-59. Ser-66 is modified (phosphoserine). One can recognise an SEP domain in the interval 141–206 (DVQILLKLWS…MEDHQDQEYI (66 aa)). Phosphoserine occurs at positions 231, 234, and 235. The UBX domain maps to 252 to 329 (DSVPTTKIQI…DILNTVLLQQ (78 aa)).

Belongs to the NSFL1C family. Interacts with VCP. Does not bind ubiquitin.

Its subcellular location is the nucleus. It localises to the cytoplasm. It is found in the cytosol. The protein localises to the endoplasmic reticulum. The protein resides in the golgi apparatus. Its subcellular location is the cytoskeleton. It localises to the microtubule organizing center. It is found in the centrosome. In terms of biological role, adapter protein required for Golgi and endoplasmic reticulum biogenesis. Involved in Golgi and endoplasmic reticulum maintenance during interphase and in their reassembly at the end of mitosis. The complex formed with VCP has membrane fusion activity; membrane fusion activity requires USO1-GOLGA2 tethering and BET1L. VCPIP1 is also required, but not its deubiquitinating activity. Together with NSFL1C/p47, regulates the centrosomal levels of kinase AURKA/Aurora A during mitotic progression by promoting AURKA removal from centrosomes in prophase. Also, regulates spindle orientation during mitosis. The chain is UBX domain-containing protein 2B (UBXN2B) from Homo sapiens (Human).